The chain runs to 274 residues: Formamidopyrimidine-DNA glycosylase (274 aa).

Pro-2 acts as the Schiff-base intermediate with DNA in catalysis. The active-site Proton donor is Glu-3. The active-site Proton donor; for beta-elimination activity is Lys-59. Positions 93, 112, and 155 each coordinate DNA. The segment at 240 to 274 (QVYGRTGRPCPRCGQPLERVRLGGRSTHFCPRCQV) adopts an FPG-type zinc-finger fold. Arg-264 acts as the Proton donor; for delta-elimination activity in catalysis.

Belongs to the FPG family. As to quaternary structure, monomer. Requires Zn(2+) as cofactor.

It catalyses the reaction Hydrolysis of DNA containing ring-opened 7-methylguanine residues, releasing 2,6-diamino-4-hydroxy-5-(N-methyl)formamidopyrimidine.. It carries out the reaction 2'-deoxyribonucleotide-(2'-deoxyribose 5'-phosphate)-2'-deoxyribonucleotide-DNA = a 3'-end 2'-deoxyribonucleotide-(2,3-dehydro-2,3-deoxyribose 5'-phosphate)-DNA + a 5'-end 5'-phospho-2'-deoxyribonucleoside-DNA + H(+). Its function is as follows. Involved in base excision repair of DNA damaged by oxidation or by mutagenic agents. Acts as a DNA glycosylase that recognizes and removes damaged bases. Has a preference for oxidized purines, such as 7,8-dihydro-8-oxoguanine (8-oxoG). Has AP (apurinic/apyrimidinic) lyase activity and introduces nicks in the DNA strand. Cleaves the DNA backbone by beta-delta elimination to generate a single-strand break at the site of the removed base with both 3'- and 5'-phosphates. The sequence is that of Formamidopyrimidine-DNA glycosylase from Moorella thermoacetica (strain ATCC 39073 / JCM 9320).